The chain runs to 248 residues: Probable transcriptional regulatory protein MYPE8020 (248 aa).

Belongs to the TACO1 family.

It is found in the cytoplasm. This is Probable transcriptional regulatory protein MYPE8020 from Malacoplasma penetrans (strain HF-2) (Mycoplasma penetrans).